The primary structure comprises 296 residues: Elongation factor Ts (296 aa).

The tract at residues Thr-81–Val-84 is involved in Mg(2+) ion dislocation from EF-Tu.

It belongs to the EF-Ts family.

It localises to the cytoplasm. Functionally, associates with the EF-Tu.GDP complex and induces the exchange of GDP to GTP. It remains bound to the aminoacyl-tRNA.EF-Tu.GTP complex up to the GTP hydrolysis stage on the ribosome. The chain is Elongation factor Ts from Ruthia magnifica subsp. Calyptogena magnifica.